The primary structure comprises 528 residues: Membrane protein insertase YidC (528 aa).

Transmembrane regions (helical) follow at residues Ile13–Pro33, Trp336–Tyr356, Leu406–Ile426, Tyr446–Met466, and Pro481–Val501.

Belongs to the OXA1/ALB3/YidC family. Type 1 subfamily. Interacts with the Sec translocase complex via SecD. Specifically interacts with transmembrane segments of nascent integral membrane proteins during membrane integration.

The protein localises to the cell inner membrane. In terms of biological role, required for the insertion and/or proper folding and/or complex formation of integral membrane proteins into the membrane. Involved in integration of membrane proteins that insert both dependently and independently of the Sec translocase complex, as well as at least some lipoproteins. Aids folding of multispanning membrane proteins. In Campylobacter jejuni subsp. jejuni serotype O:2 (strain ATCC 700819 / NCTC 11168), this protein is Membrane protein insertase YidC.